A 212-amino-acid polypeptide reads, in one-letter code: MALALSLSACSPPLRRTRRAGFRTSCSIFANPAQRAKRKLLELISEEDRGLRTQKDPKKRDEIVNAIESMTVIGRSSITTDDSLSATWRLLWTTEKEQLFIIEKAGLFGTTAGDVLQVIDVNKRILNNVITFPPDGVFFVRSDIDIASPQRVNFRFNSAVLRGKNWELPLPPFGKGWFENVYMDGEIRVAKDIRGDYLIVDRAPYNWTESFV.

The transit peptide at 1 to 25 directs the protein to the chloroplast; it reads MALALSLSACSPPLRRTRRAGFRTS.

Belongs to the PAP/fibrillin family.

The protein localises to the plastid. Its subcellular location is the chloroplast thylakoid. The chain is Probable plastid-lipid-associated protein 11, chloroplastic (PAP11) from Arabidopsis thaliana (Mouse-ear cress).